Reading from the N-terminus, the 281-residue chain is MSIEFSKYQGLGNDFILIDNRSSHTPLVSPEQAIKMCDRHFGIGADGVIFVLPGTANTDYTMRIFNSDGSEPQMCGNGIRCLARFIAHLEGGETLGKTYQIDTLAGVISPRLEAQGQVKVDMGTPYLLAKEIPTTLGNSNDKVINHSLEVAGQTWLVTCVSMGNPHCITFVKDVWGIDLPTLGPQFEHHPGFPERTNTEFIEVVRRDYVKMRVWERGAGITLACGTGACASVVAGVLTNQCDRYCIVELPGGNLTIEWSEMDNRIYMTGPAELVFTGIYNL.

Asn-13 and Asn-66 together coordinate substrate. The Proton donor role is filled by Cys-75. Substrate is bound by residues 76–77 (GN), Asn-164, Asn-197, and 215–216 (ER). Residue Cys-224 is the Proton acceptor of the active site. 225 to 226 (GT) is a substrate binding site.

Belongs to the diaminopimelate epimerase family. In terms of assembly, homodimer.

Its subcellular location is the cytoplasm. The enzyme catalyses (2S,6S)-2,6-diaminopimelate = meso-2,6-diaminopimelate. It functions in the pathway amino-acid biosynthesis; L-lysine biosynthesis via DAP pathway; DL-2,6-diaminopimelate from LL-2,6-diaminopimelate: step 1/1. Catalyzes the stereoinversion of LL-2,6-diaminopimelate (L,L-DAP) to meso-diaminopimelate (meso-DAP), a precursor of L-lysine and an essential component of the bacterial peptidoglycan. The sequence is that of Diaminopimelate epimerase from Rippkaea orientalis (strain PCC 8801 / RF-1) (Cyanothece sp. (strain PCC 8801)).